The chain runs to 147 residues: Large-conductance mechanosensitive channel (147 aa).

Transmembrane regions (helical) follow at residues 14-34 (VVDMAVGIVIGAAFGSIVKSL) and 85-105 (FGLFVNAIISFTIVAFALFMI).

This sequence belongs to the MscL family. Homopentamer.

It is found in the cell inner membrane. In terms of biological role, channel that opens in response to stretch forces in the membrane lipid bilayer. May participate in the regulation of osmotic pressure changes within the cell. The sequence is that of Large-conductance mechanosensitive channel from Tolumonas auensis (strain DSM 9187 / NBRC 110442 / TA 4).